The chain runs to 185 residues: Large ribosomal subunit protein bL25 (185 aa).

The protein belongs to the bacterial ribosomal protein bL25 family. CTC subfamily. Part of the 50S ribosomal subunit; part of the 5S rRNA/L5/L18/L25 subcomplex. Contacts the 5S rRNA. Binds to the 5S rRNA independently of L5 and L18.

This is one of the proteins that binds to the 5S RNA in the ribosome where it forms part of the central protuberance. The sequence is that of Large ribosomal subunit protein bL25 from Chlamydia muridarum (strain MoPn / Nigg).